The chain runs to 152 residues: Putative superoxide dismutase [Cu-Zn] (152 aa).

Residues His43, His45, and His60 each contribute to the Cu cation site. Cys54 and Cys144 form a disulfide bridge. 4 residues coordinate Zn(2+): His60, His68, His77, and Asp80. Cu cation is bound at residue His118.

Belongs to the Cu-Zn superoxide dismutase family. Requires Cu cation as cofactor. It depends on Zn(2+) as a cofactor.

It carries out the reaction 2 superoxide + 2 H(+) = H2O2 + O2. Destroys radicals which are normally produced within the cells and which are toxic to biological systems. The protein is Putative superoxide dismutase [Cu-Zn] (SOD) of Orgyia pseudotsugata (Douglas-fir tussock moth).